Reading from the N-terminus, the 423-residue chain is Protein CLP1 homolog (423 aa).

Residues glutamate 16, lysine 57, and 119–124 contribute to the ATP site; that span reads DVGKST.

Belongs to the Clp1 family. Clp1 subfamily.

Its subcellular location is the nucleus. Functionally, required for endonucleolytic cleavage during polyadenylation-dependent pre-mRNA 3'-end formation. This chain is Protein CLP1 homolog (cbc), found in Drosophila melanogaster (Fruit fly).